The primary structure comprises 137 residues: Ribosome-binding factor A (137 aa).

It belongs to the RbfA family. Monomer. Binds 30S ribosomal subunits, but not 50S ribosomal subunits or 70S ribosomes.

The protein localises to the cytoplasm. In terms of biological role, one of several proteins that assist in the late maturation steps of the functional core of the 30S ribosomal subunit. Associates with free 30S ribosomal subunits (but not with 30S subunits that are part of 70S ribosomes or polysomes). Required for efficient processing of 16S rRNA. May interact with the 5'-terminal helix region of 16S rRNA. This chain is Ribosome-binding factor A, found in Allorhizobium ampelinum (strain ATCC BAA-846 / DSM 112012 / S4) (Agrobacterium vitis (strain S4)).